Reading from the N-terminus, the 800-residue chain is MQMQVLTAASSLPRATLLRPAAAEPWRQSFLQLQARPIQRPGIMLHCKAQLQGQETRERRQLDDDEHARPPQGGDDDVAASTSELPYMIESIKSKLRAARNSLGETTVSAYDTAWIALVNRLDGGGERSPQFPEAIDWIARNQLPDGSWGDAGMFIVQDRLINTLGCVVALATWGVHEEQRARGLAYIQDNLWRLGEDDEEWMMVGFEITFPVLLEKAKNLGLDINYDDPALQDIYAKRQLKLAKIPREALHARPTTLLHSLEGMENLDWERLLQFKCPAGSLHSSPAASAYALSETGDKELLEYLETAINNFDGGAPCTYPVDNFDRLWSVDRLRRLGISRYFTSEIEEYLEYAYRHLSPDGMSYGGLCPVKDIDDTAMAFRLLRLHGYNVSSSVFNHFEKDGEYFCFAGQSSQSLTAMYNSYRASQIVFPGDDDGLEQLRAYCRAFLEERRATGNLRDKWVIANGLPSEVEYALDFPWKASLPRVETRVYLEQYGASEDAWIGKGLYRMTLVNNDLYLEAAKADFTNFQRLSRLEWLSLKRWYIRNNLQAHGVTEQSVLRAYFLAAANIFEPNRAAERLGWARTAILAEAIASHLRQYSANGAADGMTERLISGLASHDWDWRESNDSAARSLLYALDELIDLHAFGNASDSLREAWKQWLMSWTNESQGSTGGDTALLLVRTIEICSGRHGSAEQSLKNSEDYARLEQIASSMCSKLATKILAQNGGSMDNVEGIDQEVDVEMKELIQRVYGSSSNDVSSVTRQTFLDVVKSFCYVAHCSPETIDGHISKVLFEDVN.

Residues 52–80 form a disordered region; the sequence is QGQETRERRQLDDDEHARPPQGGDDDVAA. Residues 55–69 are compositionally biased toward basic and acidic residues; that stretch reads ETRERRQLDDDEHAR. K242 lines the substrate pocket. Mg(2+) is bound by residues D374 and D376. The DXDD motif motif lies at 374 to 377; that stretch reads DIDD. K461 is a binding site for substrate.

This sequence belongs to the terpene synthase family. The cofactor is Mg(2+).

The catalysed reaction is (2E,6E,10E)-geranylgeranyl diphosphate = ent-copalyl diphosphate. In terms of biological role, catalyzes the conversion of geranylgeranyl diphosphate to the phytoalexin precursor ent-copalyl diphosphate. This Oryza sativa subsp. indica (Rice) protein is Ent-copalyl diphosphate synthase 2 (CPS2).